The following is a 428-amino-acid chain: Serine--tRNA ligase (428 aa).

L-serine is bound at residue 231–233; sequence TAE. ATP is bound by residues 262-264 and Val278; that span reads RRE. L-serine is bound at residue Glu285. 349-352 contacts ATP; sequence EVSS. L-serine is bound at residue Ser384.

The protein belongs to the class-II aminoacyl-tRNA synthetase family. Type-1 seryl-tRNA synthetase subfamily. Homodimer. The tRNA molecule binds across the dimer.

It localises to the cytoplasm. The enzyme catalyses tRNA(Ser) + L-serine + ATP = L-seryl-tRNA(Ser) + AMP + diphosphate + H(+). It carries out the reaction tRNA(Sec) + L-serine + ATP = L-seryl-tRNA(Sec) + AMP + diphosphate + H(+). It functions in the pathway aminoacyl-tRNA biosynthesis; selenocysteinyl-tRNA(Sec) biosynthesis; L-seryl-tRNA(Sec) from L-serine and tRNA(Sec): step 1/1. Its function is as follows. Catalyzes the attachment of serine to tRNA(Ser). Is also able to aminoacylate tRNA(Sec) with serine, to form the misacylated tRNA L-seryl-tRNA(Sec), which will be further converted into selenocysteinyl-tRNA(Sec). This Chlamydia trachomatis serovar A (strain ATCC VR-571B / DSM 19440 / HAR-13) protein is Serine--tRNA ligase.